Consider the following 466-residue polypeptide: Neuronal acetylcholine receptor subunit non-alpha-3 (466 aa).

The signal sequence occupies residues 1–28; it reads MKLQISGLLLVTAVAYATIEAPEEFVSL. At 29 to 235 the chain is on the extracellular side; that stretch reads AEMEDTLLRN…VTYSFILKRL (207 aa). N-linked (GlcNAc...) asparagine glycans are attached at residues Asn-54, Asn-141, Asn-169, and Asn-208. A disulfide bridge links Cys-156 with Cys-170. 3 helical membrane passes run 236 to 260, 268 to 285, and 302 to 323; these read PLFY…VFYL, LLLS…LLVI, and YLLF…VINV. Over 324 to 438 the chain is Cytoplasmic; that stretch reads HHRSSATYHP…WKFVAQVLDR (115 aa). The chain crosses the membrane as a helical span at residues 439–456; that stretch reads IFLWVFLTASVLGTILIF.

It belongs to the ligand-gated ion channel (TC 1.A.9) family. Acetylcholine receptor (TC 1.A.9.1) subfamily. Neuronal AChR seems to be composed of two different type of subunits: alpha and non-alpha (beta). In terms of tissue distribution, retina, tectum and brain.

The protein localises to the postsynaptic cell membrane. It localises to the cell membrane. In terms of biological role, after binding acetylcholine, the AChR responds by an extensive change in conformation that affects all subunits and leads to opening of an ion-conducting channel across the plasma membrane. This Carassius auratus (Goldfish) protein is Neuronal acetylcholine receptor subunit non-alpha-3.